A 356-amino-acid polypeptide reads, in one-letter code: Tyrosine recombinase XerS (356 aa).

The region spanning 16-121 (IMPWYVLDYY…ALSSLYKYLT (106 aa)) is the Core-binding (CB) domain. The Tyr recombinase domain occupies 169-354 (AFLDYVDKEY…VNDEQKNALD (186 aa)). Active-site residues include Arg210, Lys234, His306, Arg309, and His332. Tyr341 functions as the O-(3'-phospho-DNA)-tyrosine intermediate in the catalytic mechanism.

This sequence belongs to the 'phage' integrase family. XerS subfamily.

Its subcellular location is the cytoplasm. Its activity is regulated as follows. FtsK is required for recombination. Functionally, site-specific tyrosine recombinase, which acts by catalyzing the cutting and rejoining of the recombining DNA molecules. Essential to convert dimers of the bacterial chromosome into monomers to permit their segregation at cell division. The sequence is that of Tyrosine recombinase XerS from Streptococcus equi subsp. equi (strain 4047).